A 227-amino-acid polypeptide reads, in one-letter code: Germin-like protein subfamily 3 member 2 (227 aa).

An N-terminal signal peptide occupies residues Met1–Ala24. A disulfide bridge connects residues Cys34 and Cys54. Asn56 and Asn75 each carry an N-linked (GlcNAc...) asparagine glycan. A Cupin type-1 domain is found at Ser68–Gly213. Mn(2+)-binding residues include His115, His117, Glu122, and His161.

The protein belongs to the germin family. As to quaternary structure, oligomer (believed to be a pentamer but probably hexamer).

It localises to the secreted. The protein resides in the extracellular space. Its subcellular location is the apoplast. In terms of biological role, may play a role in plant defense. Probably has no oxalate oxidase activity even if the active site is conserved. This Arabidopsis thaliana (Mouse-ear cress) protein is Germin-like protein subfamily 3 member 2.